Reading from the N-terminus, the 428-residue chain is Dihydroorotase (428 aa).

Positions 59 and 61 each coordinate Zn(2+). Substrate contacts are provided by residues 61–63 (HLR) and N93. Zn(2+) contacts are provided by D151, H178, and H231. N277 lines the substrate pocket. Residue D304 coordinates Zn(2+). D304 is a catalytic residue. Residues H308 and 322 to 323 (FG) contribute to the substrate site.

Belongs to the metallo-dependent hydrolases superfamily. DHOase family. Class I DHOase subfamily. It depends on Zn(2+) as a cofactor.

It catalyses the reaction (S)-dihydroorotate + H2O = N-carbamoyl-L-aspartate + H(+). It participates in pyrimidine metabolism; UMP biosynthesis via de novo pathway; (S)-dihydroorotate from bicarbonate: step 3/3. In terms of biological role, catalyzes the reversible cyclization of carbamoyl aspartate to dihydroorotate. This Bacillus cytotoxicus (strain DSM 22905 / CIP 110041 / 391-98 / NVH 391-98) protein is Dihydroorotase.